A 259-amino-acid polypeptide reads, in one-letter code: Eukaryotic translation initiation factor 3 subunit G-2 (259 aa).

The 79-residue stretch at 179-257 folds into the RRM domain; that stretch reads SAVRISNLSE…LILSVEWSKP (79 aa).

The protein belongs to the eIF-3 subunit G family. In terms of assembly, component of the eukaryotic translation initiation factor 3 (eIF-3) complex. The eIF-3 complex interacts with pix.

Its subcellular location is the cytoplasm. Its function is as follows. RNA-binding component of the eukaryotic translation initiation factor 3 (eIF-3) complex, which is involved in protein synthesis of a specialized repertoire of mRNAs and, together with other initiation factors, stimulates binding of mRNA and methionyl-tRNAi to the 40S ribosome. The eIF-3 complex specifically targets and initiates translation of a subset of mRNAs involved in cell proliferation. This subunit can bind 18S rRNA. This chain is Eukaryotic translation initiation factor 3 subunit G-2, found in Drosophila mojavensis (Fruit fly).